The sequence spans 641 residues: Single-strand DNA endonuclease 1 (641 aa).

Residues 1 to 90 (MGVKNLWDIL…SLKLATYRRR (90 aa)) form an N-domain region. The XPG-N domain stretch occupies residues 2 to 97 (GVKNLWDILE…RRRLGSISHA (96 aa)). Residues Asp-30, Asp-76, Glu-144, Glu-146, Asp-165, Asp-167, and Asp-217 each coordinate Mg(2+). Residues 132–217 (MALGIPCLDG…ISLAVLLGSD (86 aa)) form an XPG-I domain region. I-domain stretches follow at residues 132–220 (MALG…DYSN) and 132–221 (MALG…YSNG). A 5'-3' exonuclease domain region spans residues 217 to 350 (DYSNGVNGFG…ILPKIAEREL (134 aa)). Disordered stretches follow at residues 428 to 448 (KGEEKKQKRRARPKKSGQAAV) and 572 to 615 (VGSH…RVHH). The span at 580–590 (DGGGGGGGGVA) shows a compositional bias: gly residues.

Belongs to the XPG/RAD2 endonuclease family. GEN subfamily. Requires Mg(2+) as cofactor. Highly expressed in shoot apical meristem (SAM) and young leaves. Expressed in roots, flag leaf and panicles.

Its subcellular location is the nucleus. Its function is as follows. Single-stranded DNA endonuclease activity in vitro. May not be active as double-stranded DNA endonuclease. Endonuclease which cleaves flap structures at the junction between single-stranded DNA and double-stranded DNA with a specific cleavage site in the 5' overhang strand exactly one nucleotide 3' of the branch point. Structure- and sequence-specific nuclease that resolves holliday junctions (HJs) by symmetrically oriented incisions in two opposing strands near the junction point, thus leading to ligatable products; HJs are physical links between homologous DNA molecules that arise as central intermediary structures during homologous recombination and repair in meiotic and somatic cells. Probably involved in the resolution of toxic replication structures to ensure genome stability, and to maintain telomere integrity and replication. The polypeptide is Single-strand DNA endonuclease 1 (Oryza sativa subsp. japonica (Rice)).